A 364-amino-acid polypeptide reads, in one-letter code: Methylthioribose-1-phosphate isomerase (364 aa).

Substrate is bound by residues 53–55 (RGA), Arg90, and Gln203. Residue Asp244 is the Proton donor of the active site. Substrate is bound at residue 254-255 (NK).

It belongs to the eIF-2B alpha/beta/delta subunits family. MtnA subfamily.

It catalyses the reaction 5-(methylsulfanyl)-alpha-D-ribose 1-phosphate = 5-(methylsulfanyl)-D-ribulose 1-phosphate. Its pathway is amino-acid biosynthesis; L-methionine biosynthesis via salvage pathway; L-methionine from S-methyl-5-thio-alpha-D-ribose 1-phosphate: step 1/6. Catalyzes the interconversion of methylthioribose-1-phosphate (MTR-1-P) into methylthioribulose-1-phosphate (MTRu-1-P). This chain is Methylthioribose-1-phosphate isomerase, found in Sinorhizobium medicae (strain WSM419) (Ensifer medicae).